Consider the following 273-residue polypeptide: MTFLKKLEHAWSASQSLLQVGLDPDPKRFPRELEGKPDAIFQFCRDIVDATAPYACSFKPQIAYFAAHRAEDQLEALCQHIRAQHPDLPIVLDAKRGDIGSTAENYAREAFERYQAHALTVSPYMGLDSVEPYLAWGDRGVIVLCRTSNPGGSDLQFLKMADGQPLYLHVAGLVADKWNANGQCGLVVGATFPNELAAVRQRIGDAVPLLVPGIGAQGGDINATVQAGANSAGAGMMINSSRAILYASTGEDWRQAAGEAARGLRDAINAVRT.

Lys-95 acts as the Proton donor in catalysis.

Belongs to the OMP decarboxylase family. Type 2 subfamily.

It carries out the reaction orotidine 5'-phosphate + H(+) = UMP + CO2. It functions in the pathway pyrimidine metabolism; UMP biosynthesis via de novo pathway; UMP from orotate: step 2/2. The protein is Orotidine 5'-phosphate decarboxylase of Bordetella bronchiseptica (strain ATCC BAA-588 / NCTC 13252 / RB50) (Alcaligenes bronchisepticus).